The sequence spans 330 residues: Fructose-1,6-bisphosphatase class 1 (330 aa).

Glu-84, Asp-103, Leu-105, and Asp-106 together coordinate Mg(2+). Substrate-binding positions include Asp-106 to Ser-109, Asn-196, and Lys-262. A Mg(2+)-binding site is contributed by Glu-268.

The protein belongs to the FBPase class 1 family. Homotetramer. The cofactor is Mg(2+).

The protein localises to the cytoplasm. The enzyme catalyses beta-D-fructose 1,6-bisphosphate + H2O = beta-D-fructose 6-phosphate + phosphate. The protein operates within carbohydrate biosynthesis; gluconeogenesis. The chain is Fructose-1,6-bisphosphatase class 1 from Shewanella putrefaciens (strain CN-32 / ATCC BAA-453).